The sequence spans 84 residues: Large ribosomal subunit protein bL31 (84 aa).

Zn(2+) is bound by residues cysteine 16, cysteine 18, cysteine 38, and cysteine 41.

This sequence belongs to the bacterial ribosomal protein bL31 family. Type A subfamily. In terms of assembly, part of the 50S ribosomal subunit. Requires Zn(2+) as cofactor.

Its function is as follows. Binds the 23S rRNA. The chain is Large ribosomal subunit protein bL31 from Mycobacterium leprae (strain Br4923).